The following is a 349-amino-acid chain: 5-deoxyribose 1-phosphate isomerase (349 aa).

Substrate is bound by residues 49–51, Arg92, and Gln199; that span reads RGA. Asp240 acts as the Proton donor in catalysis. 250–251 contacts substrate; that stretch reads NK.

This sequence belongs to the EIF-2B alpha/beta/delta subunits family. DrdI subfamily.

The enzyme catalyses 5-deoxy-alpha-D-ribose 1-phosphate = 5-deoxy-D-ribulose 1-phosphate. It functions in the pathway carbohydrate degradation. In terms of biological role, catalyzes the isomerization of 5-deoxy-alpha-D-ribose 1-phosphate to 5-deoxy-D-ribulose 1-phosphate, as part of a 5-deoxyribose salvage pathway that recycles this toxic radical SAM enzyme by-product to mainstream metabolites. The chain is 5-deoxyribose 1-phosphate isomerase from Clostridium botulinum (strain Okra / Type B1).